A 214-amino-acid polypeptide reads, in one-letter code: Cytochrome b (214 aa).

Helical transmembrane passes span phenylalanine 31–isoleucine 51, tryptophan 75–isoleucine 96, tryptophan 111–leucine 131, and phenylalanine 176–leucine 196. Residues residue 81 and histidine 95 each coordinate heme b. Heme b contacts are provided by histidine 180 and histidine 194. Residue histidine 199 coordinates a ubiquinone.

This sequence belongs to the cytochrome b family. As to quaternary structure, the cytochrome bc1 complex contains 3 respiratory subunits (MT-CYB, CYC1 and UQCRFS1), 2 core proteins (UQCRC1 and UQCRC2) and probably 6 low-molecular weight proteins. The cofactor is heme b.

It is found in the mitochondrion inner membrane. Component of the ubiquinol-cytochrome c reductase complex (complex III or cytochrome b-c1 complex) that is part of the mitochondrial respiratory chain. The b-c1 complex mediates electron transfer from ubiquinol to cytochrome c. Contributes to the generation of a proton gradient across the mitochondrial membrane that is then used for ATP synthesis. This Bothriechis schlegelii (Eyelash palm pitviper) protein is Cytochrome b (MT-CYB).